The primary structure comprises 560 residues: Dihydroxy-acid dehydratase (560 aa).

Residues 1-20 (MGDNLKKRSSMTTDGDNRAP) form a disordered region. Residue C52 coordinates [2Fe-2S] cluster. D84 contacts Mg(2+). Residue C125 participates in [2Fe-2S] cluster binding. Mg(2+) contacts are provided by D126 and K127. Residue K127 is modified to N6-carboxylysine. Position 197 (C197) interacts with [2Fe-2S] cluster. Mg(2+) is bound at residue E448. S474 functions as the Proton acceptor in the catalytic mechanism.

The protein belongs to the IlvD/Edd family. Homodimer. The cofactor is [2Fe-2S] cluster. Mg(2+) is required as a cofactor.

The catalysed reaction is (2R)-2,3-dihydroxy-3-methylbutanoate = 3-methyl-2-oxobutanoate + H2O. It carries out the reaction (2R,3R)-2,3-dihydroxy-3-methylpentanoate = (S)-3-methyl-2-oxopentanoate + H2O. Its pathway is amino-acid biosynthesis; L-isoleucine biosynthesis; L-isoleucine from 2-oxobutanoate: step 3/4. It participates in amino-acid biosynthesis; L-valine biosynthesis; L-valine from pyruvate: step 3/4. Its function is as follows. Functions in the biosynthesis of branched-chain amino acids. Catalyzes the dehydration of (2R,3R)-2,3-dihydroxy-3-methylpentanoate (2,3-dihydroxy-3-methylvalerate) into 2-oxo-3-methylpentanoate (2-oxo-3-methylvalerate) and of (2R)-2,3-dihydroxy-3-methylbutanoate (2,3-dihydroxyisovalerate) into 2-oxo-3-methylbutanoate (2-oxoisovalerate), the penultimate precursor to L-isoleucine and L-valine, respectively. The protein is Dihydroxy-acid dehydratase of Leptospira interrogans serogroup Icterohaemorrhagiae serovar copenhageni (strain Fiocruz L1-130).